Here is a 197-residue protein sequence, read N- to C-terminus: dCTP deaminase, dUMP-forming (197 aa).

Residues 105-110 (RSSIGR), aspartate 123, 131-133 (TLE), glutamine 152, tyrosine 166, lysine 174, and glutamine 178 contribute to the dCTP site. Glutamate 133 (proton donor/acceptor) is an active-site residue. The segment at 161-183 (PAERPYGHPSRDSKYIGQTRPQT) is disordered. Positions 165-174 (PYGHPSRDSK) are enriched in basic and acidic residues.

The protein belongs to the dCTP deaminase family. Homotrimer.

The catalysed reaction is dCTP + 2 H2O = dUMP + NH4(+) + diphosphate. The protein operates within pyrimidine metabolism; dUMP biosynthesis; dUMP from dCTP: step 1/1. Functionally, bifunctional enzyme that catalyzes both the deamination of dCTP to dUTP and the hydrolysis of dUTP to dUMP without releasing the toxic dUTP intermediate. In Methanothermobacter thermautotrophicus (strain ATCC 29096 / DSM 1053 / JCM 10044 / NBRC 100330 / Delta H) (Methanobacterium thermoautotrophicum), this protein is dCTP deaminase, dUMP-forming.